We begin with the raw amino-acid sequence, 256 residues long: Fumarate reductase iron-sulfur subunit (256 aa).

The region spanning 7-97 is the 2Fe-2S ferredoxin-type domain; that stretch reads MNVEVLRYNP…HMRIEPLANF (91 aa). Residue Y14 participates in a menaquinone binding. The [2Fe-2S] cluster site is built by C58, C63, C66, and C78. The 30-residue stretch at 151-180 folds into the 4Fe-4S ferredoxin-type domain; that stretch reads LEKYRQFSMCINCGLCYAACPQFGLNPEFL. The [4Fe-4S] cluster site is built by C160, C163, and C166. 3 residues coordinate [3Fe-4S] cluster: C170, C216, and C222. C226 lines the [4Fe-4S] cluster pocket. Residue 237 to 240 coordinates a menaquinone; the sequence is NQGK.

The protein belongs to the succinate dehydrogenase/fumarate reductase iron-sulfur protein family. In terms of assembly, fumarate dehydrogenase forms part of an enzyme complex containing four subunits: a flavoprotein, an iron-sulfur, and two hydrophobic anchor proteins. Requires [2Fe-2S] cluster as cofactor. The cofactor is [3Fe-4S] cluster. [4Fe-4S] cluster is required as a cofactor.

The protein localises to the cell inner membrane. The enzyme catalyses a quinone + succinate = fumarate + a quinol. The catalysed reaction is a menaquinone + succinate = a menaquinol + fumarate. The protein is Fumarate reductase iron-sulfur subunit (frdB) of Haemophilus influenzae (strain ATCC 51907 / DSM 11121 / KW20 / Rd).